Reading from the N-terminus, the 529-residue chain is AT hook-containing protein attf-4 (529 aa).

Disordered stretches follow at residues 1 to 39 (MLQP…MEDD), 131 to 158 (QVVH…KPIE), 173 to 200 (GGGG…FPPP), and 233 to 255 (VSAN…DHLE). Polar residues-rich tracts occupy residues 19-31 (SVST…SPSN) and 138-153 (QNGS…TSEN). A compositionally biased stretch (basic and acidic residues) spans 179 to 189 (IHTERLSEPAR). Low complexity predominate over residues 233-248 (VSANTSTASPGPSSEG). A DNA-binding region (a.T hook) is located at residues 307–319 (GRGRGRPKLIGDE). The segment at 436–476 (LEGGSPPASSSSTATTSTATKTVKQESKNGHQNEENLNVKQ) is disordered. Residues 443–455 (ASSSSTATTSTAT) are compositionally biased toward low complexity. The segment covering 458-469 (VKQESKNGHQNE) has biased composition (basic and acidic residues).

This Caenorhabditis elegans protein is AT hook-containing protein attf-4.